Reading from the N-terminus, the 381-residue chain is Chaperone protein DnaJ (381 aa).

The J domain maps to 5-70; that stretch reads DFYEVLGVSR…QKKAAYDQYG (66 aa). Residues 136–214 form a CR-type zinc finger; that stretch reads GVSKEIEVPT…CHGQGRKQKT (79 aa). Positions 149, 152, 166, 169, 188, 191, 202, and 205 each coordinate Zn(2+). CXXCXGXG motif repeat units follow at residues 149–156, 166–173, 188–195, and 202–209; these read CDTCEGTG, CGTCHGHG, CPTCHGKG, and CNVCHGQG.

This sequence belongs to the DnaJ family. In terms of assembly, homodimer. The cofactor is Zn(2+).

The protein localises to the cytoplasm. Participates actively in the response to hyperosmotic and heat shock by preventing the aggregation of stress-denatured proteins and by disaggregating proteins, also in an autonomous, DnaK-independent fashion. Unfolded proteins bind initially to DnaJ; upon interaction with the DnaJ-bound protein, DnaK hydrolyzes its bound ATP, resulting in the formation of a stable complex. GrpE releases ADP from DnaK; ATP binding to DnaK triggers the release of the substrate protein, thus completing the reaction cycle. Several rounds of ATP-dependent interactions between DnaJ, DnaK and GrpE are required for fully efficient folding. Also involved, together with DnaK and GrpE, in the DNA replication of plasmids through activation of initiation proteins. This is Chaperone protein DnaJ from Vibrio vulnificus (strain CMCP6).